Reading from the N-terminus, the 178-residue chain is NADH-quinone oxidoreductase subunit B (178 aa).

Cysteine 45, cysteine 46, cysteine 111, and cysteine 140 together coordinate [4Fe-4S] cluster.

It belongs to the complex I 20 kDa subunit family. NDH-1 is composed of 15 different subunits. Subunits NuoB, C, D, E, F, and G constitute the peripheral sector of the complex. The cofactor is [4Fe-4S] cluster.

Its subcellular location is the cell membrane. The enzyme catalyses a quinone + NADH + 5 H(+)(in) = a quinol + NAD(+) + 4 H(+)(out). NDH-1 shuttles electrons from NADH, via FMN and iron-sulfur (Fe-S) centers, to quinones in the respiratory chain. The immediate electron acceptor for the enzyme in this species is believed to be a menaquinone. Couples the redox reaction to proton translocation (for every two electrons transferred, four hydrogen ions are translocated across the cytoplasmic membrane), and thus conserves the redox energy in a proton gradient. This is NADH-quinone oxidoreductase subunit B from Deinococcus geothermalis (strain DSM 11300 / CIP 105573 / AG-3a).